Reading from the N-terminus, the 467-residue chain is Cytochrome c-552 (467 aa).

The first 27 residues, 1 to 27 (MMKKMTGKSFALSALVAASFMAAGAMA), serve as a signal peptide directing secretion. Histidine 87 serves as a coordination point for heme c. Residues cysteine 115, cysteine 118, and lysine 119 each contribute to the heme site. Positions 153, 156, 157, 195, 198, and 199 each coordinate heme c. Residues glutamate 201, tyrosine 202, lysine 250, and glutamine 252 each contribute to the Ca(2+) site. Residue tyrosine 202 coordinates substrate. Histidine 253 contacts substrate. Positions 264, 271, 274, 275, 290, 303, 306, 307, and 382 each coordinate heme c.

Belongs to the cytochrome c-552 family. Ca(2+) serves as cofactor. Heme c is required as a cofactor.

It localises to the periplasm. It carries out the reaction 6 Fe(III)-[cytochrome c] + NH4(+) + 2 H2O = 6 Fe(II)-[cytochrome c] + nitrite + 8 H(+). It functions in the pathway nitrogen metabolism; nitrate reduction (assimilation). In terms of biological role, catalyzes the reduction of nitrite to ammonia, consuming six electrons in the process. This chain is Cytochrome c-552, found in Shewanella sp. (strain W3-18-1).